The following is a 350-amino-acid chain: Cell division protein ZipA (350 aa).

Residues 1 to 6 (MEDLQL) are Periplasmic-facing. A helical transmembrane segment spans residues 7-27 (VLFVLGAIAIVAVLVHGFWSI). Residues 28–350 (RKQQPRTIKE…QYLARIRANA (323 aa)) lie on the Cytoplasmic side of the membrane. Disordered stretches follow at residues 36 to 55 (KEQPRTPYAMSPGRRDAEGF), 65 to 136 (VRKL…PSAR), and 187 to 213 (RVPADQGQAAHSAATQAEPQAKAEEPL). Basic and acidic residues-rich tracts occupy residues 65–109 (VRKL…ESRA) and 116–131 (AAHERRGHDFRHHEEP).

The protein belongs to the ZipA family. In terms of assembly, interacts with FtsZ via their C-terminal domains.

The protein resides in the cell inner membrane. In terms of biological role, essential cell division protein that stabilizes the FtsZ protofilaments by cross-linking them and that serves as a cytoplasmic membrane anchor for the Z ring. Also required for the recruitment to the septal ring of downstream cell division proteins. This Shewanella amazonensis (strain ATCC BAA-1098 / SB2B) protein is Cell division protein ZipA.